The chain runs to 557 residues: Formate--tetrahydrofolate ligase (557 aa).

ATP is bound at residue 66 to 73 (TPAGEGKS).

The protein belongs to the formate--tetrahydrofolate ligase family.

It carries out the reaction (6S)-5,6,7,8-tetrahydrofolate + formate + ATP = (6R)-10-formyltetrahydrofolate + ADP + phosphate. The protein operates within one-carbon metabolism; tetrahydrofolate interconversion. In Clostridium botulinum (strain 657 / Type Ba4), this protein is Formate--tetrahydrofolate ligase.